Consider the following 221-residue polypeptide: Serine/arginine-rich splicing factor 2 (221 aa).

N-acetylserine is present on S2. Residue S2 is modified to Phosphoserine. The region spanning 14 to 92 (TSLKVDNLTY…RELRVQMARY (79 aa)) is the RRM domain. T22 and T25 each carry phosphothreonine. Phosphoserine is present on S26. K52 carries the post-translational modification N6-acetyllysine. A disordered region spans residues 92-221 (YGRPPDSHHS…SPEEEGAVSS (130 aa)). 2 stretches are compositionally biased toward basic residues: residues 117–171 (RRSR…RSKS) and 179–189 (SRSRSRSRSRS). S189, S191, S204, S206, S208, S212, and S220 each carry phosphoserine.

It belongs to the splicing factor SR family. As to quaternary structure, interacts with CCNL1 and CCNL2. Interacts with SCAF11. Interacts with ZRSR2/U2AF1-RS2. Interacts with CCDC55 (via C-terminus). In vitro, self-associates and binds SRSF1/SFRS1 (ASF/SF2), SNRNP70 and U2AF1 but not U2AF2. Binds SREK1/SFRS12. Interacts with BRDT. In terms of processing, extensively phosphorylated on serine residues in the RS domain. Phosphorylated by SRPK2 and this causes its redistribution from the nuclear speckle to nucleoplasm and controls cell fate decision in response to cisplatin treatment. KAT5/TIP60 inhibits its phosphorylation by preventing SRPK2 nuclear translocation. Post-translationally, acetylation on Lys-52 by KAT5/TIP60 promotes its proteasomal degradation. This effect is counterbalanced by HDAC6, which positively controls SRSF2 protein level by deacetylating it and preventing its proteasomal degradation. Expressed in all the tissues examined; liver, kidney, spleen, heart, lung and brain.

Its subcellular location is the nucleus. It is found in the nucleoplasm. It localises to the nucleus speckle. Necessary for the splicing of pre-mRNA. It is required for formation of the earliest ATP-dependent splicing complex and interacts with spliceosomal components bound to both the 5'- and 3'-splice sites during spliceosome assembly. It also is required for ATP-dependent interactions of both U1 and U2 snRNPs with pre-mRNA. Can bind to the myelin basic protein (MBP) gene MB3 regulatory region and increase transcription of the mbp promoter in cells derived from the CNS. The phosphorylated form (by SRPK2) is required for cellular apoptosis in response to cisplatin treatment. This Mus musculus (Mouse) protein is Serine/arginine-rich splicing factor 2 (Srsf2).